Reading from the N-terminus, the 302-residue chain is 3-methyl-2-oxobutanoate hydroxymethyltransferase 1 (302 aa).

Mg(2+)-binding residues include aspartate 75 and aspartate 118. Residues 75 to 76 (DS), aspartate 118, and lysine 147 each bind 3-methyl-2-oxobutanoate. Glutamate 149 contributes to the Mg(2+) binding site. Glutamate 217 serves as the catalytic Proton acceptor.

Belongs to the PanB family. Homodecamer; pentamer of dimers. It depends on Mg(2+) as a cofactor.

Its subcellular location is the cytoplasm. It catalyses the reaction 3-methyl-2-oxobutanoate + (6R)-5,10-methylene-5,6,7,8-tetrahydrofolate + H2O = 2-dehydropantoate + (6S)-5,6,7,8-tetrahydrofolate. The protein operates within cofactor biosynthesis; (R)-pantothenate biosynthesis; (R)-pantoate from 3-methyl-2-oxobutanoate: step 1/2. Its function is as follows. Catalyzes the reversible reaction in which hydroxymethyl group from 5,10-methylenetetrahydrofolate is transferred onto alpha-ketoisovalerate to form ketopantoate. This is 3-methyl-2-oxobutanoate hydroxymethyltransferase 1 from Zymomonas mobilis subsp. mobilis (strain ATCC 31821 / ZM4 / CP4).